Consider the following 630-residue polypeptide: GATA-type transcription factor SRE1 (630 aa).

Disordered stretches follow at residues Met-1–Trp-139 and Asp-162–Asp-203. 3 stretches are compositionally biased toward polar residues: residues Asp-66–Asn-82, Lys-115–Thr-133, and Tyr-175–Gly-196. The GATA-type 1 zinc finger occupies Cys-128–Cys-152. The segment at Cys-219–Cys-237 is cystein-rich region (CRR). Positions His-256–Glu-283 are disordered. Polar residues predominate over residues Pro-258–Gln-267. The GATA-type 2 zinc finger occupies Cys-291–Cys-315. The interval Lys-339–Gln-609 is disordered. Polar residues predominate over residues Ser-349–Pro-363. Low complexity-rich tracts occupy residues Asn-436–His-447 and Ser-492–Pro-503. The segment covering Gly-504–Leu-513 has biased composition (polar residues). Residues Ser-558–Leu-568 are compositionally biased toward low complexity. Over residues Val-595–Gln-609 the composition is skewed to basic and acidic residues. Residues Val-595 to Glu-630 are a coiled coil.

The protein localises to the nucleus. Functionally, GATA-type transcription repressor that regulates iron- acquisition genes through specific binding the GATA sequence element 5'-(G/A)ATC(T/A)GATAA-3' of target promoters in an iron- and zinc-dependent manner. Regulation occurs via direct binding of iron ions. Iron acquisition regulation is critical for survival under both iron-limiting conditions (to acquire essential iron) and iron-replete conditions (to limit iron toxicity). SRE1 targets include genes encoding a number of key iron-regulated factors such as those involved in siderophore biosynthesis, presumed ferric reductase activity, iron-responsive transcriptional regulation, oxidative stress response, as well as genes encoding a number of putative oxidoreductases, metabolic and mitochondrial enzymes, superoxide dismutase, and genes previously identified as induced during nitrosative stress. This Ajellomyces capsulatus (Darling's disease fungus) protein is GATA-type transcription factor SRE1.